A 626-amino-acid polypeptide reads, in one-letter code: DNA (cytosine-5)-methyltransferase DRM2 (626 aa).

2 consecutive UBA domains span residues G59 to Y101 and S109 to C150. Positions V160–K187 are enriched in acidic residues. Disordered stretches follow at residues V160–S196 and T245–M282. The 43-residue stretch at N190–C232 folds into the UBA 3 domain. The span at E262 to I276 shows a compositional bias: basic and acidic residues. In terms of domain architecture, SAM-dependent MTase DRM-type spans T295 to S626.

It belongs to the class I-like SAM-binding methyltransferase superfamily. DRM-methyltransferase family. In terms of assembly, interacts with RDM1. In terms of tissue distribution, expressed in roots, inflorescences and at lower levels in leaves.

It is found in the nucleus. Its subcellular location is the nucleoplasm. The catalysed reaction is a 2'-deoxycytidine in DNA + S-adenosyl-L-methionine = a 5-methyl-2'-deoxycytidine in DNA + S-adenosyl-L-homocysteine + H(+). In terms of biological role, involved in de novo DNA methylation. Controls asymmetric and CpNpG methylation. Required for FWA gene silencing but not for the maintenance of SUP gene silencing. Functionally redundant to CMT3 to maintain non-CpG methylation. Involved in RNA-directed DNA methylation (RdDM). Acts as major DNA methyltransferase in the RdDM pathway, and is essential for RNA-directed de novo DNA methylation of cytosines in all sequence contexts. Associates with long non-coding RNA (lncRNA) produced by RNA polymerase V (Pol V). This association is dependent on AGO4 and IDN2, and results in DNA methylation of RdDM target loci. In Arabidopsis thaliana (Mouse-ear cress), this protein is DNA (cytosine-5)-methyltransferase DRM2 (DRM2).